The sequence spans 190 residues: Threonylcarbamoyl-AMP synthase (190 aa).

Positions 7–190 (GDAIAAAIDV…ALTGELFRQG (184 aa)) constitute a YrdC-like domain.

It belongs to the SUA5 family. TsaC subfamily.

Its subcellular location is the cytoplasm. The catalysed reaction is L-threonine + hydrogencarbonate + ATP = L-threonylcarbamoyladenylate + diphosphate + H2O. Functionally, required for the formation of a threonylcarbamoyl group on adenosine at position 37 (t(6)A37) in tRNAs that read codons beginning with adenine. Catalyzes the conversion of L-threonine, HCO(3)(-)/CO(2) and ATP to give threonylcarbamoyl-AMP (TC-AMP) as the acyladenylate intermediate, with the release of diphosphate. The chain is Threonylcarbamoyl-AMP synthase from Escherichia coli O6:H1 (strain CFT073 / ATCC 700928 / UPEC).